A 332-amino-acid polypeptide reads, in one-letter code: Mitotic spindle assembly checkpoint protein MAD2B (332 aa).

An HORMA domain is found at 4–332; it reads EHFCDCIGEF…RTFTEQSITK (329 aa). Disordered regions lie at residues 181 to 204 and 225 to 244; these read KTQQSSSSSSSLKTSGGGDGNGFI and KSNQKNKKEDNDDNNNGDKD. Basic and acidic residues predominate over residues 230–244; that stretch reads NKKEDNDDNNNGDKD.

Belongs to the MAD2 family.

It localises to the nucleus. Its function is as follows. Adapter protein able to interact with different proteins and involved in different biological processes. The chain is Mitotic spindle assembly checkpoint protein MAD2B (mad2l2) from Dictyostelium discoideum (Social amoeba).